A 120-amino-acid chain; its full sequence is Large ribosomal subunit protein uL24 (120 aa).

The segment at 1–26 is disordered; it reads MSKQPDKQRKSQRRAPLHERHKQVRA. Over residues 10-24 the composition is skewed to basic residues; that stretch reads KSQRRAPLHERHKQV.

It belongs to the universal ribosomal protein uL24 family. In terms of assembly, part of the 50S ribosomal subunit. Interacts weakly with protein L4.

One of two assembly initiator proteins, it binds directly to the 5'-end of the 23S rRNA, where it nucleates assembly of the 50S subunit. Functionally, stabilizes the tertiary rRNA structure within the 23S rRNA domain (domain I) to which it binds. Located at the polypeptide exit tunnel on the outside of the subunit. This chain is Large ribosomal subunit protein uL24 (rpl24), found in Haloarcula marismortui (strain ATCC 43049 / DSM 3752 / JCM 8966 / VKM B-1809) (Halobacterium marismortui).